The sequence spans 65 residues: Large ribosomal subunit protein bL33c (65 aa).

The protein belongs to the bacterial ribosomal protein bL33 family.

It localises to the plastid. The protein localises to the chloroplast. The sequence is that of Large ribosomal subunit protein bL33c from Staurastrum punctulatum (Green alga).